The primary structure comprises 1165 residues: Vacuolar segregation protein 7 (1165 aa).

At 1–919 the chain is on the cytoplasmic side; it reads MTEEDRKLTV…RKSPFVKVKN (919 aa). Residues 118–147 form a disordered region; that stretch reads SVSSTNNNSNNALINHNPLSSHLSNPSSSL. Phosphoserine is present on Ser164. Disordered regions lie at residues 215–241, 274–423, 461–497, and 560–668; these read SNNT…LPSL, KAKN…SEKP, LIFP…SAPL, and EPPH…KRPL. The segment covering 216 to 230 has biased composition (polar residues); that stretch reads NNTAPSTSNNIGSNT. Residues 334–345 show a composition bias toward low complexity; sequence TTSTKTAPSTAP. Polar residues predominate over residues 346 to 367; that stretch reads LGSTDNTQALTASVSSSNADNH. Positions 375–391 are enriched in low complexity; it reads SSNNNGNNSNSASNKTN. Residues 393–412 are compositionally biased toward polar residues; sequence DIKNSNADLSASTSNNNAIN. The span at 413 to 423 shows a compositional bias: basic and acidic residues; sequence DDSHESNSEKP. Low complexity-rich tracts occupy residues 469–485 and 562–571; these read QQQQ…QQQQ and PHQLQQQQPP. Positions 576–587 are enriched in polar residues; sequence SVDSYTSDNPDS. A compositionally biased stretch (low complexity) spans 599 to 613; the sequence is SLVSLSKVSPHLLSS. Over residues 614-662 the composition is skewed to polar residues; the sequence is TSSNGNTISCPNVATNSQELEPNNDISTKKSLSNSTLRHSSANRNSNYG. Residues 920–940 form a helical; Signal-anchor for type II membrane protein membrane-spanning segment; that stretch reads FLYLAFVISSLLMTGFILGFL. Residues 941-1165 are Vacuolar-facing; sequence LATNKELQDV…KDSMVHPGKK (225 aa). Asn1020 and Asn1099 each carry an N-linked (GlcNAc...) asparagine glycan. The disordered stretch occupies residues 1074 to 1121; it reads SPGSREAKHENDDDDDDDGDDGDDENNTNERQYKSKPNARDDKEDDTK. The span at 1085–1100 shows a compositional bias: acidic residues; that stretch reads DDDDDDDGDDGDDENN. Basic and acidic residues predominate over residues 1111-1121; it reads NARDDKEDDTK.

Component of the PI(3,5)P2 regulatory complex, composed of ATG18, FIG4, FAB1, VAC14 and VAC7. VAC14 nucleates the assembly of the complex and serves as a scaffold. Post-translationally, N-glycosylated.

It localises to the vacuole membrane. Functionally, the PI(3,5)P2 regulatory complex regulates both the synthesis and turnover of phosphatidylinositol 3,5-bisphosphate (PtdIns(3,5)P2). Positively regulates FAB1 kinase activity. Major activator of FAB1 during hyperosmotic shock and can elevate levels of PtdIns(3,5)P2 in the absence of VAC14 and FIG4. Directly involved in vacuolar membrane scission. Required for normal vacuole acidification, inheritance and morphology. This chain is Vacuolar segregation protein 7 (VAC7), found in Saccharomyces cerevisiae (strain ATCC 204508 / S288c) (Baker's yeast).